The primary structure comprises 517 residues: MDIIGGQHLRQMWDDLADVYGHKTALICESSGGVVNRYSYLELNQEINRTANLFYTLGIRKGDKVALHLDNCPEFIFCWFGLAKIGAIMVPINARLLREESTWILQNSQACLLVTSAQFYPMYQQIQQEDASQLRHICLIDMALPADDGVSSFTQLKNQQPATLCYAPPLSTDDTAEILFTSGTTSRPKGVVITHYNLRFAGYYSAWQCALRDDDVYLTVMPAFHIDCQCTAAMAAFSAGATFVLVEKYSARAFWGQVQKYRATITECIPMMIRTLMVQPPSANDRQHRLREVMFYLNLSEQEKDAFCERFGVSLLTSYGMTETIVGIIGDRPGDKRRWPSIGRAGFCYEAEIRDDHNRPLPAGELGEICIKGVPGKTIFKEYFLNPKATAKVLEADGWLHTGDTGYRDEEGFFYFVDRRCNMIKRGGENVSCVELENIIATHPKIQDIVVVGIKDSIRDEAIKAFVVLNEGETLSEEEFFCFCEQNMAKFKVPSYLEIRKDLPRNCSGKIIRKNLK.

Belongs to the ATP-dependent AMP-binding enzyme family.

It catalyses the reaction 4-(trimethylamino)butanoate + ATP + CoA = 4-(trimethylamino)butanoyl-CoA + AMP + diphosphate. It carries out the reaction crotonobetaine + ATP + CoA = crotonobetainyl-CoA + AMP + diphosphate. The catalysed reaction is (R)-carnitine + ATP + CoA = (R)-carnitinyl-CoA + AMP + diphosphate. The protein operates within amine and polyamine metabolism; carnitine metabolism. Catalyzes the transfer of CoA to carnitine, generating the initial carnitinyl-CoA needed for the CaiB reaction cycle. Also has activity toward crotonobetaine and gamma-butyrobetaine. This is Crotonobetaine/carnitine--CoA ligase from Escherichia coli O45:K1 (strain S88 / ExPEC).